Here is a 540-residue protein sequence, read N- to C-terminus: (13S,14R)-13-O-acetyl-1-hydroxy-N-methylcanadine 8-hydroxylase CYP82X1 (540 aa).

The helical transmembrane segment at 15–35 (FSIILVTTVSIVLLYSVFFWV) threads the bilayer. Cys483 lines the heme pocket.

This sequence belongs to the cytochrome P450 family. Heme serves as cofactor. In terms of tissue distribution, highly expressed in capsules. Expressed is stems.

It localises to the membrane. The enzyme catalyses (13S,14R)-13-O-acetyl-1-hydroxy-N-methylcanadine + reduced [NADPH--hemoprotein reductase] + O2 = (13S,14R)-13-O-acetyl-1,8-dihydroxy-N-methylcanadine + oxidized [NADPH--hemoprotein reductase] + H2O + H(+). It participates in alkaloid biosynthesis. In terms of biological role, cytochrome P450 involved in the biosynthesis of the benzylisoquinoline alkaloid noscapine. Converts (13S,14R)-13-O-acetyl-1-hydroxy-N-methylcanadine to (13S,14R)-13-O-acetyl-1,8-dihydroxy-N-methylcanadine. This chain is (13S,14R)-13-O-acetyl-1-hydroxy-N-methylcanadine 8-hydroxylase CYP82X1, found in Papaver somniferum (Opium poppy).